We begin with the raw amino-acid sequence, 274 residues long: Diaminopimelate epimerase (274 aa).

Residues asparagine 11, glutamine 44, and asparagine 64 each contribute to the substrate site. Residue cysteine 73 is the Proton donor of the active site. Substrate-binding positions include 74–75 (GN), asparagine 157, asparagine 190, and 208–209 (ER). Cysteine 217 acts as the Proton acceptor in catalysis. 218–219 (GS) is a binding site for substrate.

The protein belongs to the diaminopimelate epimerase family. As to quaternary structure, homodimer.

Its subcellular location is the cytoplasm. It catalyses the reaction (2S,6S)-2,6-diaminopimelate = meso-2,6-diaminopimelate. Its pathway is amino-acid biosynthesis; L-lysine biosynthesis via DAP pathway; DL-2,6-diaminopimelate from LL-2,6-diaminopimelate: step 1/1. In terms of biological role, catalyzes the stereoinversion of LL-2,6-diaminopimelate (L,L-DAP) to meso-diaminopimelate (meso-DAP), a precursor of L-lysine and an essential component of the bacterial peptidoglycan. The chain is Diaminopimelate epimerase from Salmonella agona (strain SL483).